Consider the following 550-residue polypeptide: DNA mismatch repair protein MutL (550 aa).

Belongs to the DNA mismatch repair MutL/HexB family.

In terms of biological role, this protein is involved in the repair of mismatches in DNA. It is required for dam-dependent methyl-directed DNA mismatch repair. May act as a 'molecular matchmaker', a protein that promotes the formation of a stable complex between two or more DNA-binding proteins in an ATP-dependent manner without itself being part of a final effector complex. This chain is DNA mismatch repair protein MutL, found in Microcystis aeruginosa (strain NIES-843 / IAM M-2473).